A 482-amino-acid polypeptide reads, in one-letter code: Cytochrome c-552 (482 aa).

Residues 1-26 form the signal peptide; sequence MIKVSNALQRILIGAALALFGGGAQA. A heme c-binding site is contributed by His98. Heme is bound by residues Cys126, Cys129, and Lys130. Residues Cys164, Cys167, His168, Cys213, Cys216, and His217 each contribute to the heme c site. Positions 219, 220, 265, and 267 each coordinate Ca(2+). Position 220 (Tyr220) interacts with substrate. Residue His268 participates in substrate binding. 9 residues coordinate heme c: His279, Cys286, Cys289, His290, His305, Cys318, Cys321, His322, and His397.

This sequence belongs to the cytochrome c-552 family. Requires Ca(2+) as cofactor. The cofactor is heme c.

Its subcellular location is the periplasm. It carries out the reaction 6 Fe(III)-[cytochrome c] + NH4(+) + 2 H2O = 6 Fe(II)-[cytochrome c] + nitrite + 8 H(+). It functions in the pathway nitrogen metabolism; nitrate reduction (assimilation). Catalyzes the reduction of nitrite to ammonia, consuming six electrons in the process. This Edwardsiella ictaluri (strain 93-146) protein is Cytochrome c-552.